The chain runs to 91 residues: Small ribosomal subunit protein uS19 (91 aa).

This sequence belongs to the universal ribosomal protein uS19 family.

Its function is as follows. Protein S19 forms a complex with S13 that binds strongly to the 16S ribosomal RNA. The protein is Small ribosomal subunit protein uS19 of Azoarcus sp. (strain BH72).